Here is a 277-residue protein sequence, read N- to C-terminus: Translation initiation factor 2 subunit alpha (277 aa).

Residues 22–93 enclose the S1 motif domain; the sequence is GEIVVGTVQE…KRGQVDVSLK (72 aa).

This sequence belongs to the eIF-2-alpha family. In terms of assembly, heterotrimer composed of an alpha, a beta and a gamma chain.

Functionally, eIF-2 functions in the early steps of protein synthesis by forming a ternary complex with GTP and initiator tRNA. The sequence is that of Translation initiation factor 2 subunit alpha (eif2a) from Aeropyrum pernix (strain ATCC 700893 / DSM 11879 / JCM 9820 / NBRC 100138 / K1).